A 521-amino-acid chain; its full sequence is Glucose-6-phosphate isomerase (521 aa).

Residue E327 is the Proton donor of the active site. Active-site residues include H358 and K486.

The protein belongs to the GPI family.

Its subcellular location is the cytoplasm. It catalyses the reaction alpha-D-glucose 6-phosphate = beta-D-fructose 6-phosphate. It participates in carbohydrate biosynthesis; gluconeogenesis. The protein operates within carbohydrate degradation; glycolysis; D-glyceraldehyde 3-phosphate and glycerone phosphate from D-glucose: step 2/4. Functionally, catalyzes the reversible isomerization of glucose-6-phosphate to fructose-6-phosphate. This Bordetella bronchiseptica (strain ATCC BAA-588 / NCTC 13252 / RB50) (Alcaligenes bronchisepticus) protein is Glucose-6-phosphate isomerase.